The sequence spans 478 residues: Protein nucleotidyltransferase YdiU (478 aa).

ATP contacts are provided by G84, G86, R87, K107, D119, G120, R170, and R177. The Proton acceptor role is filled by D246. Mg(2+) contacts are provided by N247 and D256. An ATP-binding site is contributed by D256.

It belongs to the SELO family. Requires Mg(2+) as cofactor. The cofactor is Mn(2+).

The catalysed reaction is L-seryl-[protein] + ATP = 3-O-(5'-adenylyl)-L-seryl-[protein] + diphosphate. It carries out the reaction L-threonyl-[protein] + ATP = 3-O-(5'-adenylyl)-L-threonyl-[protein] + diphosphate. It catalyses the reaction L-tyrosyl-[protein] + ATP = O-(5'-adenylyl)-L-tyrosyl-[protein] + diphosphate. The enzyme catalyses L-histidyl-[protein] + UTP = N(tele)-(5'-uridylyl)-L-histidyl-[protein] + diphosphate. The catalysed reaction is L-seryl-[protein] + UTP = O-(5'-uridylyl)-L-seryl-[protein] + diphosphate. It carries out the reaction L-tyrosyl-[protein] + UTP = O-(5'-uridylyl)-L-tyrosyl-[protein] + diphosphate. In terms of biological role, nucleotidyltransferase involved in the post-translational modification of proteins. It can catalyze the addition of adenosine monophosphate (AMP) or uridine monophosphate (UMP) to a protein, resulting in modifications known as AMPylation and UMPylation. This chain is Protein nucleotidyltransferase YdiU, found in Shigella boydii serotype 18 (strain CDC 3083-94 / BS512).